Here is a 181-residue protein sequence, read N- to C-terminus: GMP synthase [glutamine-hydrolyzing] subunit A (181 aa).

Residues 2-181 enclose the Glutamine amidotransferase type-1 domain; sequence KILVVNNYGQ…FDNFLEICRR (180 aa). Cys-72 functions as the Nucleophile in the catalytic mechanism. Catalysis depends on residues His-159 and Glu-161.

In terms of assembly, heterodimer composed of a glutamine amidotransferase subunit (A) and a GMP-binding subunit (B).

The catalysed reaction is XMP + L-glutamine + ATP + H2O = GMP + L-glutamate + AMP + diphosphate + 2 H(+). It functions in the pathway purine metabolism; GMP biosynthesis; GMP from XMP (L-Gln route): step 1/1. Functionally, catalyzes the synthesis of GMP from XMP. This chain is GMP synthase [glutamine-hydrolyzing] subunit A, found in Methanothrix thermoacetophila (strain DSM 6194 / JCM 14653 / NBRC 101360 / PT) (Methanosaeta thermophila).